A 417-amino-acid polypeptide reads, in one-letter code: Phosphoglycerate kinase 2 (417 aa).

S4 carries the phosphoserine modification. K11 is subject to N6-acetyllysine. Residues V23, D24, F25, N26, Q38, and R39 each contribute to the (2R)-3-phosphoglycerate site. K48 bears the N6-acetyllysine mark. S62, H63, G65, and R66 together coordinate (2R)-3-phosphoglycerate. K75, K86, and K97 each carry N6-acetyllysine. 2 residues coordinate (2R)-3-phosphoglycerate: L122 and R123. N6-acetyllysine is present on residues K131 and K146. Positions 170 and 171 each coordinate (2R)-3-phosphoglycerate. Y196 carries the phosphotyrosine modification. An N6-acetyllysine modification is found at K199. An ADP-binding site is contributed by G214. Position 214 (G214) interacts with CDP. AMP is bound by residues A215 and K216. Residue A215 participates in ATP binding. Mg(2+) is bound at residue A215. D219 is a CDP binding site. D219 contacts Mg(2+). Residue K220 participates in AMP binding. An ATP-binding site is contributed by K220. G238 provides a ligand contact to ADP. G238 contacts CDP. G239 provides a ligand contact to AMP. G239 is a binding site for ATP. Residues K267 and K291 each carry the N6-acetyllysine modification. An AMP-binding site is contributed by G313. G313 is a binding site for ATP. Positions 338, 340, and 343 each coordinate CDP. F343 lines the ADP pocket. E344 is an AMP binding site. Residues E344, D375, and T376 each coordinate ATP. D375 is a Mg(2+) binding site.

Belongs to the phosphoglycerate kinase family. As to quaternary structure, monomer. Mg(2+) is required as a cofactor. As to expression, testis and sperm. Localized on the principle piece in the sperm (at protein level). Testis-specific.

The protein resides in the cytoplasm. It carries out the reaction (2R)-3-phosphoglycerate + ATP = (2R)-3-phospho-glyceroyl phosphate + ADP. It participates in carbohydrate degradation; glycolysis; pyruvate from D-glyceraldehyde 3-phosphate: step 2/5. Functionally, essential for sperm motility and male fertility but is not required for the completion of spermatogenesis. The protein is Phosphoglycerate kinase 2 (Pgk2) of Mus musculus (Mouse).